A 148-amino-acid chain; its full sequence is Large ribosomal subunit protein bL9 (148 aa).

Belongs to the bacterial ribosomal protein bL9 family.

Functionally, binds to the 23S rRNA. This chain is Large ribosomal subunit protein bL9, found in Staphylococcus epidermidis (strain ATCC 35984 / DSM 28319 / BCRC 17069 / CCUG 31568 / BM 3577 / RP62A).